Consider the following 203-residue polypeptide: Endo-type membrane-bound lytic murein transglycosylase A (203 aa).

The N-terminal stretch at 1–15 is a signal peptide; that stretch reads MKLRWLMWLVVFLAG. Residue Cys-16 is the site of N-palmitoyl cysteine attachment. A lipid anchor (S-diacylglycerol cysteine) is attached at Cys-16.

This sequence belongs to the transglycosylase Slt family.

It localises to the cell outer membrane. It carries out the reaction Endolytic cleavage of the (1-&gt;4)-beta-glycosidic linkage between N-acetylmuramic acid (MurNAc) and N-acetylglucosamine (GlcNAc) residues in peptidoglycan with concomitant formation of a 1,6-anhydrobond in the MurNAc residue.. Functionally, murein-degrading enzyme. May play a role in recycling of muropeptides during cell elongation and/or cell division. Preferentially cleaves at a distance of more than two disaccharide units from the ends of the glycan chain. This Cronobacter sakazakii (strain ATCC BAA-894) (Enterobacter sakazakii) protein is Endo-type membrane-bound lytic murein transglycosylase A.